The primary structure comprises 357 residues: Membrane-bound lytic murein transglycosylase C (357 aa).

The signal sequence occupies residues 1–17 (MKLKKFLVLLLIPFLYA). C18 carries the N-palmitoyl cysteine lipid modification. C18 carries the S-diacylglycerol cysteine lipid modification.

Belongs to the transglycosylase Slt family.

It is found in the cell outer membrane. The catalysed reaction is Exolytic cleavage of the (1-&gt;4)-beta-glycosidic linkage between N-acetylmuramic acid (MurNAc) and N-acetylglucosamine (GlcNAc) residues in peptidoglycan, from either the reducing or the non-reducing ends of the peptidoglycan chains, with concomitant formation of a 1,6-anhydrobond in the MurNAc residue.. Functionally, murein-degrading enzyme. May play a role in recycling of muropeptides during cell elongation and/or cell division. The chain is Membrane-bound lytic murein transglycosylase C from Mannheimia succiniciproducens (strain KCTC 0769BP / MBEL55E).